The following is a 200-amino-acid chain: Ras-related protein Rab-10 (200 aa).

GTP contacts are provided by Ser-18, Gly-19, Val-20, Gly-21, Lys-22, Thr-23, Cys-24, Asn-35, Thr-36, Ser-40, and Thr-41. A Mg(2+)-binding site is contributed by Thr-23. 2 short sequence motifs (switch) span residues 32 to 46 (DAFN…GIDF) and 64 to 81 (DTAG…YYRG). Mg(2+) is bound by residues Thr-41 and Asp-64. Residues Gly-67, Asn-122, Lys-123, Asp-125, Met-126, Ser-152, Ala-153, and Lys-154 each coordinate GTP. The tract at residues 181–200 (RENVDISTTGGGTGLKKCCS) is disordered. S-geranylgeranyl cysteine attachment occurs at residues Cys-198 and Cys-199.

This sequence belongs to the small GTPase superfamily. Rab family. The cofactor is Mg(2+).

The protein resides in the cytoplasmic vesicle membrane. Its subcellular location is the golgi apparatus. The protein localises to the trans-Golgi network membrane. It localises to the endosome membrane. It is found in the recycling endosome membrane. The protein resides in the cytoplasmic vesicle. Its subcellular location is the phagosome membrane. The protein localises to the cell projection. It localises to the cilium. It is found in the endoplasmic reticulum membrane. The enzyme catalyses GTP + H2O = GDP + phosphate + H(+). Regulated by guanine nucleotide exchange factors (GEFs) which promote the exchange of bound GDP for free GTP. Regulated by GTPase activating proteins (GAPs) which increase the GTP hydrolysis activity. Inhibited by GDP dissociation inhibitors (GDIs) which prevent Rab-GDP dissociation. The small GTPases Rab are key regulators of intracellular membrane trafficking, from the formation of transport vesicles to their fusion with membranes. Rabs cycle between an inactive GDP-bound form and an active GTP-bound form that is able to recruit to membranes different set of downstream effectors directly responsible for vesicle formation, movement, tethering and fusion. That Rab is mainly involved in the biosynthetic transport of proteins from the Golgi to the plasma membrane. Also plays a specific role in asymmetric protein transport to the plasma membrane within the polarized neuron and epithelial cells. In neurons, it is involved in axonogenesis through regulation of vesicular membrane trafficking toward the axonal plasma membrane while in epithelial cells, it regulates transport from the Golgi to the basolateral membrane. Moreover, may play a role in the basolateral recycling pathway and in phagosome maturation. Finally, may play a role in endoplasmic reticulum dynamics and morphology controlling tubulation along microtubules and tubules fusion. May participate in the export of neosynthesized proteins through a Rab-dependent endosomal export route. The sequence is that of Ras-related protein Rab-10 from Diplobatis ommata (Ocellated electric ray).